The chain runs to 152 residues: Xanthine-guanine phosphoribosyltransferase (152 aa).

5-phospho-alpha-D-ribose 1-diphosphate-binding positions include 37–38, arginine 69, and 88–96; these read RG and DDLVDTGGT. Arginine 69 is a binding site for GMP. A Mg(2+)-binding site is contributed by aspartate 89. Guanine contacts are provided by aspartate 92 and isoleucine 135. Xanthine-binding residues include aspartate 92 and isoleucine 135. GMP is bound by residues 92–96 and 134–135; these read DTGGT and WI.

Belongs to the purine/pyrimidine phosphoribosyltransferase family. XGPT subfamily. Homotetramer. Mg(2+) is required as a cofactor.

The protein localises to the cell inner membrane. It carries out the reaction GMP + diphosphate = guanine + 5-phospho-alpha-D-ribose 1-diphosphate. The catalysed reaction is XMP + diphosphate = xanthine + 5-phospho-alpha-D-ribose 1-diphosphate. It catalyses the reaction IMP + diphosphate = hypoxanthine + 5-phospho-alpha-D-ribose 1-diphosphate. It functions in the pathway purine metabolism; GMP biosynthesis via salvage pathway; GMP from guanine: step 1/1. It participates in purine metabolism; XMP biosynthesis via salvage pathway; XMP from xanthine: step 1/1. Its function is as follows. Purine salvage pathway enzyme that catalyzes the transfer of the ribosyl-5-phosphate group from 5-phospho-alpha-D-ribose 1-diphosphate (PRPP) to the N9 position of the 6-oxopurines guanine and xanthine to form the corresponding ribonucleotides GMP (guanosine 5'-monophosphate) and XMP (xanthosine 5'-monophosphate), with the release of PPi. To a lesser extent, also acts on hypoxanthine. The protein is Xanthine-guanine phosphoribosyltransferase of Enterobacter sp. (strain 638).